The primary structure comprises 239 residues: tRNA (guanine-N(1)-)-methyltransferase (239 aa).

Residues Gly-108 and 127-132 (LGDYVL) contribute to the S-adenosyl-L-methionine site.

The protein belongs to the RNA methyltransferase TrmD family. In terms of assembly, homodimer.

It is found in the cytoplasm. The enzyme catalyses guanosine(37) in tRNA + S-adenosyl-L-methionine = N(1)-methylguanosine(37) in tRNA + S-adenosyl-L-homocysteine + H(+). Functionally, specifically methylates guanosine-37 in various tRNAs. In Streptococcus pneumoniae serotype 19F (strain G54), this protein is tRNA (guanine-N(1)-)-methyltransferase.